We begin with the raw amino-acid sequence, 314 residues long: Vacuolar membrane protein SCY_4732 (314 aa).

The disordered stretch occupies residues 32–61 (KPTSSVVSETSSKSLPSLTSSAFSTSSGTT). Residues 93–113 (VYIAVGAVIGAIFISILIWWL) traverse the membrane as a helical segment. 3 positions are modified to phosphoserine: Ser148, Ser254, and Ser274. The interval 240-309 (EERKLNLNRP…PSMFLDDVLN (70 aa)) is disordered. Positions 254 to 269 (SPERKEKKINSMEGYH) are enriched in basic and acidic residues.

It belongs to the PRM5 family.

It localises to the vacuole membrane. The chain is Vacuolar membrane protein SCY_4732 from Saccharomyces cerevisiae (strain YJM789) (Baker's yeast).